A 787-amino-acid chain; its full sequence is Lon protease (787 aa).

Residues 12 to 210 form the Lon N-terminal domain; the sequence is LPLIPLRGLA…LIYSILLEEI (199 aa). Residue 362-369 participates in ATP binding; the sequence is GPPGTGKT. The 182-residue stretch at 599 to 780 folds into the Lon proteolytic domain; that stretch reads NPQIGLVNGL…DEVLEQALLK (182 aa). Residues Ser686 and Lys729 contribute to the active site.

This sequence belongs to the peptidase S16 family. Homohexamer. Organized in a ring with a central cavity.

The protein localises to the cytoplasm. The catalysed reaction is Hydrolysis of proteins in presence of ATP.. In terms of biological role, ATP-dependent serine protease that mediates the selective degradation of mutant and abnormal proteins as well as certain short-lived regulatory proteins. Required for cellular homeostasis and for survival from DNA damage and developmental changes induced by stress. Degrades polypeptides processively to yield small peptide fragments that are 5 to 10 amino acids long. Binds to DNA in a double-stranded, site-specific manner. The protein is Lon protease of Clostridioides difficile (strain 630) (Peptoclostridium difficile).